A 163-amino-acid polypeptide reads, in one-letter code: Nucleotide-binding protein PM1656 (163 aa).

The protein belongs to the YajQ family.

Its function is as follows. Nucleotide-binding protein. In Pasteurella multocida (strain Pm70), this protein is Nucleotide-binding protein PM1656.